The primary structure comprises 183 residues: Adenine phosphoribosyltransferase (183 aa).

This sequence belongs to the purine/pyrimidine phosphoribosyltransferase family. In terms of assembly, homodimer.

Its subcellular location is the cytoplasm. It carries out the reaction AMP + diphosphate = 5-phospho-alpha-D-ribose 1-diphosphate + adenine. It functions in the pathway purine metabolism; AMP biosynthesis via salvage pathway; AMP from adenine: step 1/1. Catalyzes a salvage reaction resulting in the formation of AMP, that is energically less costly than de novo synthesis. The sequence is that of Adenine phosphoribosyltransferase from Klebsiella pneumoniae (strain 342).